A 355-amino-acid chain; its full sequence is UDP-N-acetylglucosamine--N-acetylmuramyl-(pentapeptide) pyrophosphoryl-undecaprenol N-acetylglucosamine transferase (355 aa).

Residues 15-17, Asn-127, Arg-163, Ser-191, Ile-244, 263-268, and Gln-288 contribute to the UDP-N-acetyl-alpha-D-glucosamine site; these read TGG and ALTVSE.

It belongs to the glycosyltransferase 28 family. MurG subfamily.

It is found in the cell inner membrane. The enzyme catalyses di-trans,octa-cis-undecaprenyl diphospho-N-acetyl-alpha-D-muramoyl-L-alanyl-D-glutamyl-meso-2,6-diaminopimeloyl-D-alanyl-D-alanine + UDP-N-acetyl-alpha-D-glucosamine = di-trans,octa-cis-undecaprenyl diphospho-[N-acetyl-alpha-D-glucosaminyl-(1-&gt;4)]-N-acetyl-alpha-D-muramoyl-L-alanyl-D-glutamyl-meso-2,6-diaminopimeloyl-D-alanyl-D-alanine + UDP + H(+). The protein operates within cell wall biogenesis; peptidoglycan biosynthesis. Its function is as follows. Cell wall formation. Catalyzes the transfer of a GlcNAc subunit on undecaprenyl-pyrophosphoryl-MurNAc-pentapeptide (lipid intermediate I) to form undecaprenyl-pyrophosphoryl-MurNAc-(pentapeptide)GlcNAc (lipid intermediate II). This is UDP-N-acetylglucosamine--N-acetylmuramyl-(pentapeptide) pyrophosphoryl-undecaprenol N-acetylglucosamine transferase from Salmonella enteritidis PT4 (strain P125109).